The primary structure comprises 162 residues: G/U mismatch-specific DNA glycosylase (162 aa).

This sequence belongs to the uracil-DNA glycosylase (UDG) superfamily. TDG/mug family. In terms of assembly, binds DNA as a monomer.

The protein resides in the cytoplasm. The catalysed reaction is Specifically hydrolyzes mismatched double-stranded DNA and polynucleotides, releasing free uracil.. Functionally, excises ethenocytosine and uracil, which can arise by alkylation or deamination of cytosine, respectively, from the corresponding mispairs with guanine in ds-DNA. It is capable of hydrolyzing the carbon-nitrogen bond between the sugar-phosphate backbone of the DNA and the mispaired base. The complementary strand guanine functions in substrate recognition. Required for DNA damage lesion repair in stationary-phase cells. In Serratia proteamaculans (strain 568), this protein is G/U mismatch-specific DNA glycosylase.